Consider the following 82-residue polypeptide: MKAGIHPDYRTVVFHDTSADVYYRTGSTIKTDRTIELEGTHYPYVIIEVSSASHPYYTGKQKEYSKEGSTARFHQRFGNFFK.

This sequence belongs to the bacterial ribosomal protein bL31 family. Type B subfamily. As to quaternary structure, part of the 50S ribosomal subunit.

This chain is Large ribosomal subunit protein bL31B, found in Pectobacterium atrosepticum (strain SCRI 1043 / ATCC BAA-672) (Erwinia carotovora subsp. atroseptica).